Reading from the N-terminus, the 197-residue chain is MEARRYGPNIIVTGTPGCGKSSTCEFLKNKLKDYKYYNISDFAKDNDCFEGYDEGRKSHIVDEDKLLDMLEPLLRQGNSIVDWHVNDVFPERLIDLVVVLRCDNSNLYSRLHARGYHDSKIEENLDAEIMGVVKQDAVESYEPHIVVELQSDTKEDMVSNVSRIVAWEKMWLEQHPDGVTNEYQGPRSDDEDDEDSE.

5 residues coordinate ATP: Gly-17, Gly-19, Lys-20, Ser-21, and Ser-22. The interval 38–61 is NMPbind; it reads NISDFAKDNDCFEGYDEGRKSHIV. The tract at residues 113–123 is LID; it reads ARGYHDSKIEE. Arg-114 lines the ATP pocket. Residues 176 to 197 are disordered; sequence PDGVTNEYQGPRSDDEDDEDSE. Phosphotyrosine is present on Tyr-183. Phosphoserine occurs at positions 188 and 196.

The protein belongs to the adenylate kinase family. AK6 subfamily. Interacts with small ribosomal subunit protein uS11B/RPS14B. Not a structural component of 43S pre-ribosomes, but transiently interacts with them by binding to uS11/RPS14.

The protein localises to the cytoplasm. Its subcellular location is the nucleus. The enzyme catalyses AMP + ATP = 2 ADP. It catalyses the reaction ATP + H2O = ADP + phosphate + H(+). Its function is as follows. Broad-specificity nucleoside monophosphate (NMP) kinase that catalyzes the reversible transfer of the terminal phosphate group between nucleoside triphosphates and monophosphates. Also has ATPase activity. Involved in the late cytoplasmic maturation steps of the 40S ribosomal particles, specifically 18S rRNA maturation. Required for cleavage of the 20S pre-rRNA at site D in the cytoplasm. While NMP activity is not required for ribosome maturation, ATPase activity is. Associates transiently with small ribosomal subunit protein uS11. ATP hydrolysis breaks the interaction with uS11. May temporarily remove uS11 from the ribosome to enable a conformational change of the ribosomal RNA that is needed for the final maturation step of the small ribosomal subunit. Promotes formation of the rotated state in 80S-like ribosomes, a key intermediate in translocation, thereby releasing the essential assembly factor DIM1 from pre-40S subunits. Its NMP activity may have a role in nuclear energy homeostasis. Involved in oxidative stress response. Required for POS9-dependent target gene transcription upon oxidative stress. The polypeptide is Adenylate kinase isoenzyme 6 homolog FAP7 (Saccharomyces cerevisiae (strain ATCC 204508 / S288c) (Baker's yeast)).